The sequence spans 523 residues: MGVWYAIGSIIFGLLVGVSVYLISRKIFHSNSQIIIEQAKAKAKAIEYEAQNILQKHHMQIKEEQMRLKQEYEQECATLHKNYESRLAKLDKEESNRYQQLNNQKQEVEKEKQEIAELKVRLLRSQGEQDKLKQEYQHIKKEMLDVLSKYAQMTREEATNILLSHLEEELIEEKAFLIRRYEKQAYDEAKKQANFVLAQATTRYAGDFATERLVNVINLPNDELKGRIIGKEGRNIKTLETISGVDVIVDDTPGSIILSSFNLYRRAIATKTIEKLVEDGRIQPSRIEEVYERVKDEMDEQMRQDGENIVLDMELGYMHPELKFLLGKMRYRASFGQNALGHSIEVANLAAIIAGELGGDEKLARRAGILHDIGKALTQELGGSHVDLGVEVCTCYKEHPVVINAIKAHHGYEEIQSIECAAVCAADTLSAARPGARREALENFLKRMQDIERIAMDKIGVKQAYAINAGREVRVIARADLVSDGQSVILAREIAKEIESTLQYPGEIKVSVIRETRAVEFAR.

Residues 3-23 (VWYAIGSIIFGLLVGVSVYLI) form a helical membrane-spanning segment. Residues 213–279 (LVNVINLPND…TKTIEKLVED (67 aa)) enclose the KH domain. The region spanning 339–432 (ALGHSIEVAN…VCAADTLSAA (94 aa)) is the HD domain.

Belongs to the RNase Y family.

It is found in the cell membrane. Its function is as follows. Endoribonuclease that initiates mRNA decay. The protein is Ribonuclease Y of Helicobacter hepaticus (strain ATCC 51449 / 3B1).